A 476-amino-acid polypeptide reads, in one-letter code: Protein transport protein Sec61 subunit alpha (476 aa).

Topologically, residues 2–33 (GIKFLEVIKPFCAVLPEIQKPERKIQFREKVL) are cytoplasmic. The helical transmembrane segment at 34–53 (WTAITLFIFLVCCQIPLFGI) threads the bilayer. At 54–76 (MSSDSADPFYWMRVILASNRGTL) the chain is on the lumenal side. The helical transmembrane segment at 77–96 (MELGISPIVTSGLIMQLLAG) threads the bilayer. At 97-117 (AKIIGVGDTPKDRALFNGAQK) the chain is on the cytoplasmic side. Residues 118–138 (LFGMIITIGQAIVYVMTGMYG) form a helical membrane-spanning segment. Residues 139-144 (DPSEMG) are Lumenal-facing. The chain crosses the membrane as a helical span at residues 145 to 165 (AGICLLIIIQLFVAGLIVLLL). Residues 166 to 172 (DELLQKG) lie on the Cytoplasmic side of the membrane. A helical transmembrane segment spans residues 173 to 193 (YGLGSGISLFIATNICETIVW). Residues 194 to 240 (KAFSPTTVNTGRGTEFEGAIIALFHLLATRTDKVRALREGFYRQNLP) are Lumenal-facing. Residues 241-261 (NLMNLIATVFVFAVVIYFQGF) form a helical membrane-spanning segment. Residues 262-288 (RVDLPIKSARYRGQYNTYPIKLFYTSN) are Cytoplasmic-facing. The helical transmembrane segment at 289–309 (IPIILQSALVSNLYVISQMLS) threads the bilayer. Over 310–354 (TRFSGNFLVNLLGTWSDATSGGPARAYPVAGLCYYLSPPESFGSV) the chain is Lumenal. Residues 355–375 (LDDPVHAGIYIVFMLGSCAFF) traverse the membrane as a helical segment. The Cytoplasmic segment spans residues 376–420 (SKTWIEVSGSSAKDVAKQLKEQQMVMRGHRETSMVHELNRYIPTA). Residues 421 to 441 (AAFGGLCIGGLSVMADFLGAI) form a helical membrane-spanning segment. Residues 442–445 (GSGT) are Lumenal-facing. A helical membrane pass occupies residues 446 to 462 (GILLAVTIIYQYFEIFV). Residues 463–476 (KEQSEVGSMGALLF) are Cytoplasmic-facing.

Belongs to the SecY/SEC61-alpha family. In terms of assembly, the SEC61 channel-forming translocon complex consists of channel-forming core components SEC61A1, SEC61B and SEC61G and different auxiliary components such as SEC62 and SEC63. The SEC61 channel associates with the multi-pass translocon (MPT) complex.

The protein localises to the endoplasmic reticulum membrane. Its function is as follows. Component of SEC61 channel-forming translocon complex that mediates transport of signal peptide-containing precursor polypeptides across the endoplasmic reticulum (ER). Forms a ribosome receptor and a gated pore in the ER membrane, both functions required for cotranslational translocation of nascent polypeptides. May cooperate with auxiliary protein SEC62, SEC63 and HSPA5/BiP to enable post-translational transport of small presecretory proteins. The SEC61 channel is also involved in ER membrane insertion of transmembrane proteins: it mediates membrane insertion of the first few transmembrane segments of proteins, while insertion of subsequent transmembrane regions of multi-pass membrane proteins is mediated by the multi-pass translocon (MPT) complex. This is Protein transport protein Sec61 subunit alpha (sec61a) from Hemitripterus americanus (Sea raven).